The following is a 151-amino-acid chain: D-aminoacyl-tRNA deacylase (151 aa).

Residues 136-137 (GP) carry the Gly-cisPro motif, important for rejection of L-amino acids motif.

The protein belongs to the DTD family. As to quaternary structure, homodimer.

The protein localises to the cytoplasm. The catalysed reaction is glycyl-tRNA(Ala) + H2O = tRNA(Ala) + glycine + H(+). The enzyme catalyses a D-aminoacyl-tRNA + H2O = a tRNA + a D-alpha-amino acid + H(+). Its function is as follows. An aminoacyl-tRNA editing enzyme that deacylates mischarged D-aminoacyl-tRNAs. Also deacylates mischarged glycyl-tRNA(Ala), protecting cells against glycine mischarging by AlaRS. Acts via tRNA-based rather than protein-based catalysis; rejects L-amino acids rather than detecting D-amino acids in the active site. By recycling D-aminoacyl-tRNA to D-amino acids and free tRNA molecules, this enzyme counteracts the toxicity associated with the formation of D-aminoacyl-tRNA entities in vivo and helps enforce protein L-homochirality. This Lactococcus lactis subsp. cremoris (strain MG1363) protein is D-aminoacyl-tRNA deacylase.